The sequence spans 331 residues: Ketol-acid reductoisomerase (NADP(+)) (331 aa).

Residues 2-182 (AKLFYDSDAD…GGTRAGILET (181 aa)) enclose the KARI N-terminal Rossmann domain. NADP(+) is bound by residues 25–28 (YGSQ), Ser51, Ser53, and 83–86 (DEFQ). The active site involves His108. An NADP(+)-binding site is contributed by Gly134. The KARI C-terminal knotted domain maps to 183–328 (NFKEETETDL…KTLRSMFSWL (146 aa)). Positions 191, 195, 227, and 231 each coordinate Mg(2+). Ser252 serves as a coordination point for substrate.

The protein belongs to the ketol-acid reductoisomerase family. It depends on Mg(2+) as a cofactor.

The enzyme catalyses (2R)-2,3-dihydroxy-3-methylbutanoate + NADP(+) = (2S)-2-acetolactate + NADPH + H(+). The catalysed reaction is (2R,3R)-2,3-dihydroxy-3-methylpentanoate + NADP(+) = (S)-2-ethyl-2-hydroxy-3-oxobutanoate + NADPH + H(+). Its pathway is amino-acid biosynthesis; L-isoleucine biosynthesis; L-isoleucine from 2-oxobutanoate: step 2/4. The protein operates within amino-acid biosynthesis; L-valine biosynthesis; L-valine from pyruvate: step 2/4. Involved in the biosynthesis of branched-chain amino acids (BCAA). Catalyzes an alkyl-migration followed by a ketol-acid reduction of (S)-2-acetolactate (S2AL) to yield (R)-2,3-dihydroxy-isovalerate. In the isomerase reaction, S2AL is rearranged via a Mg-dependent methyl migration to produce 3-hydroxy-3-methyl-2-ketobutyrate (HMKB). In the reductase reaction, this 2-ketoacid undergoes a metal-dependent reduction by NADPH to yield (R)-2,3-dihydroxy-isovalerate. The polypeptide is Ketol-acid reductoisomerase (NADP(+)) (Prochlorococcus marinus (strain NATL1A)).